We begin with the raw amino-acid sequence, 155 residues long: 3-hydroxyacyl-[acyl-carrier-protein] dehydratase FabZ (155 aa).

His54 is a catalytic residue.

This sequence belongs to the thioester dehydratase family. FabZ subfamily.

It localises to the cytoplasm. It carries out the reaction a (3R)-hydroxyacyl-[ACP] = a (2E)-enoyl-[ACP] + H2O. Functionally, involved in unsaturated fatty acids biosynthesis. Catalyzes the dehydration of short chain beta-hydroxyacyl-ACPs and long chain saturated and unsaturated beta-hydroxyacyl-ACPs. This Burkholderia ambifaria (strain MC40-6) protein is 3-hydroxyacyl-[acyl-carrier-protein] dehydratase FabZ.